The primary structure comprises 216 residues: Acetate CoA-transferase subunit beta (216 aa).

Glu46 is a catalytic residue.

The protein belongs to the 3-oxoacid CoA-transferase subunit B family. As to quaternary structure, heterotetramer composed of two alpha subunits (AtoD) and two beta subunits (AtoA).

It is found in the cytoplasm. It catalyses the reaction an acyl-CoA + acetate = a carboxylate + acetyl-CoA. The enzyme catalyses acetoacetate + acetyl-CoA = acetoacetyl-CoA + acetate. The catalysed reaction is butanoate + acetyl-CoA = butanoyl-CoA + acetate. It carries out the reaction acetoacetate + butanoyl-CoA = acetoacetyl-CoA + butanoate. The protein operates within lipid metabolism; short-chain fatty acid metabolism. Inhibited by p-chloromercuribenzoate. Coenzyme A transferase which is involved in short-chain fatty acid degradation and catalyzes the activation of short-chain fatty acids to their respective CoA thiolesters. During acetoacetate degradation, catalyzes the transfer of CoA from acetyl-CoA to acetoacetate by a mechanism involving a covalent enzyme-CoA compound as a reaction intermediate. Utilizes a variety of short chain acyl-CoA and carboxylic acid substrates but exhibits maximal activity with normal and 3-keto substrates. The polypeptide is Acetate CoA-transferase subunit beta (Escherichia coli (strain K12)).